A 209-amino-acid polypeptide reads, in one-letter code: Large ribosomal subunit protein uL3 (209 aa).

Q150 is modified (N5-methylglutamine).

It belongs to the universal ribosomal protein uL3 family. Part of the 50S ribosomal subunit. Forms a cluster with proteins L14 and L19. In terms of processing, methylated by PrmB.

Its function is as follows. One of the primary rRNA binding proteins, it binds directly near the 3'-end of the 23S rRNA, where it nucleates assembly of the 50S subunit. The chain is Large ribosomal subunit protein uL3 from Photobacterium profundum (strain SS9).